The primary structure comprises 235 residues: RAD9, HUS1, RAD1-interacting nuclear orphan protein 1 (235 aa).

Ser50 is subject to Phosphoserine. The RAD1-binding motif motif lies at 54–60; that stretch reads SWVSPQF. Disordered stretches follow at residues 75–106, 111–130, and 149–198; these read HRDQARRPTRRSTCKFPRLTFESPQSSSSETL, RVQPQNSEKDPPRRPLVPLF, and VFAP…LVKD. Over residues 96–106 the composition is skewed to polar residues; sequence ESPQSSSSETL. The D-box motif lies at 123 to 130; the sequence is RRPLVPLF. Over residues 161–173 the composition is skewed to basic and acidic residues; it reads SVRDDPISPDQKE. Residues 171-175 carry the KEN box motif; that stretch reads QKENS.

Interacts (when phosphorylated by PLK1) with POLQ; promoting POLQ recruitment to DNA damage sites. Interacts with RAD1; interaction is direct and promotes association with the 9-1-1 (RAD9-RAD1-HUS1) complex. Interacts with RAD18. Interacts with TOPBP1. Interacts with UBE2N. Post-translationally, phosphorylated at Ser-50 by PLK1, promoting interaction with polymerase theta (POLQ). Ubiquitinated and degraded by the APC/C complex upon mitotic exit.

It is found in the nucleus. The protein resides in the chromosome. In terms of biological role, involved in microhomology-mediated end-joining (MMEJ) DNA repair by promoting recruitment of polymerase theta (POLQ) to DNA damage sites during mitosis. MMEJ is an alternative non-homologous end-joining (NHEJ) machinery that takes place during mitosis to repair double-strand breaks in DNA that originate in S-phase. Accumulates in M-phase; following phosphorylation by PLK1, interacts with POLQ, enabling its recruitment to double-strand breaks for subsequent repair. Also involved in the DNA damage response (DDR) signaling in response to genotoxic stresses such as ionizing radiation (IR) during the S phase. Recruited to sites of DNA damage through interaction with the 9-1-1 cell-cycle checkpoint response complex and TOPBP1 in a ATR-dependent manner. Required for the progression of the G1 to S phase transition. Plays a role in the stimulation of CHEK1 phosphorylation. The chain is RAD9, HUS1, RAD1-interacting nuclear orphan protein 1 (Rhno1) from Mus musculus (Mouse).